Here is a 392-residue protein sequence, read N- to C-terminus: Nicotinate phosphoribosyltransferase (392 aa).

Residue H214 is modified to Phosphohistidine; by autocatalysis.

Belongs to the NAPRTase family. Post-translationally, transiently phosphorylated on a His residue during the reaction cycle. Phosphorylation strongly increases the affinity for substrates and increases the rate of nicotinate D-ribonucleotide production. Dephosphorylation regenerates the low-affinity form of the enzyme, leading to product release.

It carries out the reaction nicotinate + 5-phospho-alpha-D-ribose 1-diphosphate + ATP + H2O = nicotinate beta-D-ribonucleotide + ADP + phosphate + diphosphate. The protein operates within cofactor biosynthesis; NAD(+) biosynthesis; nicotinate D-ribonucleotide from nicotinate: step 1/1. Functionally, catalyzes the synthesis of beta-nicotinate D-ribonucleotide from nicotinate and 5-phospho-D-ribose 1-phosphate at the expense of ATP. The chain is Nicotinate phosphoribosyltransferase from Xanthomonas axonopodis pv. citri (strain 306).